Reading from the N-terminus, the 663-residue chain is MGSMYRASKTLKSSRQALSILFNSLNSNRQNPTCIGLYQAYGFSSDSRQSSKEPTIDLTKFPSEKIRNFSIIAHIDHGKSTLADRLMELTGTIKKGHGQPQYLDKLQVERERGITVKAQTATMFYENKVEDQEASGYLLNLIDTPGHVDFSYEVSRSLSACQGALLVVDAAQGVQAQTVANFYLAFEANLTIVPVINKIDQPTADPERVKAQLKSMFDLDTEDVLLVSAKTGLGLEHVLPAVIERIPPPPGISESPLRMLLFDSFFNEYKGVICYVSVVDGMLSKGDKVSFAASGQSYEVLDVGIMHPELTSTGMLLTGQVGYIVTGMRTTKEARIGDTIYRTKTTVEPLPGFKPVRHMVFSGVYPADGSDFEALGHAMEKLTCNDASVSVAKETSTALGMGFRCGFLGLLHMDVFHQRLEQEYGTQVISTIPTVPYTFEYSDGSKLQVQNPAALPSNPKYRVTASWEPTVIATIILPSEYVGAVINLCSDRRGQQLEYTFIDAQRVFLKYQLPLREIVVDFYDELKSITSGYASFDYEDAEYQASDLVKLDILLNGQAVDALATIVHKQKAYRVGKELVEKLKNYIERQMFEVMIQAAIGSKIIARDTISAMRKNVLAKCYGGDITRKKKLLEKQKEGKKRMKRVGSVDIPHEAFQQILKVS.

In terms of domain architecture, tr-type G spans 64 to 250 (EKIRNFSIIA…AVIERIPPPP (187 aa)). GTP contacts are provided by residues 73–80 (AHIDHGKS), 143–147 (DTPGH), and 197–200 (NKID).

It belongs to the TRAFAC class translation factor GTPase superfamily. Classic translation factor GTPase family. LepA subfamily.

The protein resides in the mitochondrion inner membrane. The enzyme catalyses GTP + H2O = GDP + phosphate + H(+). Functionally, promotes mitochondrial protein synthesis. May act as a fidelity factor of the translation reaction, by catalyzing a one-codon backward translocation of tRNAs on improperly translocated ribosomes. Binds to mitochondrial ribosomes in a GTP-dependent manner. The chain is Translation factor GUF1 homolog, mitochondrial from Arabidopsis thaliana (Mouse-ear cress).